The primary structure comprises 251 residues: Core protein VP8 (251 aa).

Residues 1–32 (MSLLLENLIEEDTIFFAGSISEYDDLQMVIAG) constitute a propeptide, removed by core protease OPG083.

Belongs to the orthopoxvirus OPG098 family. Post-translationally, undergoes morphogenesis-associated proteolysis which cleaves the 28 kDa to a 25-kDa product. Proteolytic cleavage of major core proteins P4a (OPG136), P4b (OPG129), and VP8 (OPG098), which occurs at a late stage of core formation, is required for production of infectious mature virions (MV).

The protein localises to the virion. Its subcellular location is the host cytoplasm. Its function is as follows. Major core structural protein. This Monkeypox virus protein is Core protein VP8 (OPG098).